The sequence spans 577 residues: Urease subunit alpha (577 aa).

The region spanning 136-577 (GGIDCHVHFI…LPMAQRYFLF (442 aa)) is the Urease domain. Residues His141, His143, and Lys224 each contribute to the Ni(2+) site. N6-carboxylysine is present on Lys224. Position 226 (His226) interacts with substrate. 2 residues coordinate Ni(2+): His253 and His279. His327 (proton donor) is an active-site residue. Asp367 contacts Ni(2+).

Belongs to the metallo-dependent hydrolases superfamily. Urease alpha subunit family. As to quaternary structure, heterotrimer of UreA (gamma), UreB (beta) and UreC (alpha) subunits. Three heterotrimers associate to form the active enzyme. Requires Ni cation as cofactor. Carboxylation allows a single lysine to coordinate two nickel ions.

Its subcellular location is the cytoplasm. The enzyme catalyses urea + 2 H2O + H(+) = hydrogencarbonate + 2 NH4(+). It participates in nitrogen metabolism; urea degradation; CO(2) and NH(3) from urea (urease route): step 1/1. This chain is Urease subunit alpha, found in Mycobacteroides abscessus (strain ATCC 19977 / DSM 44196 / CCUG 20993 / CIP 104536 / JCM 13569 / NCTC 13031 / TMC 1543 / L948) (Mycobacterium abscessus).